The following is a 1027-amino-acid chain: Presequence protease, mitochondrial (1027 aa).

A mitochondrion-targeting transit peptide spans 1–22 (MIRQCWAGLRLCRALYQTSYRW). His98 contacts Zn(2+). Glu101 acts as the Proton acceptor in catalysis. Zn(2+)-binding residues include His102 and Glu199. A disulfide bridge connects residues Cys113 and Cys550. The tract at residues 803–827 (RKAIRPHVVEKSSNPSPSGSEISRT) is disordered. Residues 814 to 825 (SSNPSPSGSEIS) are compositionally biased toward low complexity.

This sequence belongs to the peptidase M16 family. PreP subfamily. As to quaternary structure, monomer and homodimer; homodimerization is induced by binding of the substrate. It depends on Zn(2+) as a cofactor. Post-translationally, a disulfide bond locks the enzyme in the closed conformation preventing substrate entry into the catalytic chamber.

It localises to the mitochondrion matrix. Mainly exists in a closed and catalytically competent conformation but a closed-to-open switch allows substrate entry into the catalytic chamber. Substrate binding induces closure and dimerization. A disulfide bond may lock the enzyme in a closed conformation preventing substrate entry into the catalytic chamber, participating in redox regulation of the enzyme. Inhibited by metal-chelating agents. Inhibited by nickel and zinc excess, and slightly activated by manganese. Functionally, metalloendopeptidase of the mitochondrial matrix that functions in peptide cleavage and degradation rather than in protein processing. Has an ATP-independent activity. Specifically cleaves peptides in the range of 5 to 65 residues. Shows a preference for cleavage after small polar residues and before basic residues, but without any positional preference. Degrades the transit peptides of mitochondrial proteins after their cleavage. Also degrades other unstructured peptides. This is Presequence protease, mitochondrial (pitrm1) from Xenopus laevis (African clawed frog).